A 216-amino-acid chain; its full sequence is ATP phosphoribosyltransferase (216 aa).

The protein belongs to the ATP phosphoribosyltransferase family. Short subfamily. Heteromultimer composed of HisG and HisZ subunits.

It localises to the cytoplasm. The enzyme catalyses 1-(5-phospho-beta-D-ribosyl)-ATP + diphosphate = 5-phospho-alpha-D-ribose 1-diphosphate + ATP. Its pathway is amino-acid biosynthesis; L-histidine biosynthesis; L-histidine from 5-phospho-alpha-D-ribose 1-diphosphate: step 1/9. Its function is as follows. Catalyzes the condensation of ATP and 5-phosphoribose 1-diphosphate to form N'-(5'-phosphoribosyl)-ATP (PR-ATP). Has a crucial role in the pathway because the rate of histidine biosynthesis seems to be controlled primarily by regulation of HisG enzymatic activity. This chain is ATP phosphoribosyltransferase, found in Prochlorococcus marinus (strain MIT 9211).